Reading from the N-terminus, the 111-residue chain is Ig kappa chain V-III region PC 3741/TEPC 111 (111 aa).

Positions 1-23 (DIVLTQSPASLAVSLGQRATISC) are framework-1. C23 and C92 are oxidised to a cystine. Residues 24-38 (RASESVDSYGNSFMH) are complementarity-determining-1. The framework-2 stretch occupies residues 39-53 (WYQQKPGQPPKLLIY). The tract at residues 54-60 (RASNLES) is complementarity-determining-2. The interval 61–92 (GIPARFSGSGSRTDFTLTINPVEADDVATYYC) is framework-3. The complementarity-determining-3 stretch occupies residues 93-101 (QQSNEDPYT). The segment at 102 to 111 (FGGGTKLEIK) is framework-4.

In Mus musculus (Mouse), this protein is Ig kappa chain V-III region PC 3741/TEPC 111.